Here is a 308-residue protein sequence, read N- to C-terminus: Nodulation protein D 1 (308 aa).

In terms of domain architecture, HTH lysR-type spans 6–63 (LDLNLLVALDALMTERKLTAAARRINLSQPAMSAAIARLRTYFGDELFSMQGRELIPT). The H-T-H motif DNA-binding region spans 23–42 (LTAAARRINLSQPAMSAAIA).

This sequence belongs to the LysR transcriptional regulatory family.

In terms of biological role, nodD regulates the expression of the nodABCFE genes which encode other nodulation proteins. NodD is also a negative regulator of its own expression. Binds flavonoids as inducers. The sequence is that of Nodulation protein D 1 (nodD1) from Rhizobium meliloti (strain 1021) (Ensifer meliloti).